The sequence spans 98 residues: Co-chaperonin GroES (98 aa).

This sequence belongs to the GroES chaperonin family. Heptamer of 7 subunits arranged in a ring. Interacts with the chaperonin GroEL.

It localises to the cytoplasm. Functionally, together with the chaperonin GroEL, plays an essential role in assisting protein folding. The GroEL-GroES system forms a nano-cage that allows encapsulation of the non-native substrate proteins and provides a physical environment optimized to promote and accelerate protein folding. GroES binds to the apical surface of the GroEL ring, thereby capping the opening of the GroEL channel. This chain is Co-chaperonin GroES, found in Corynebacterium diphtheriae (strain ATCC 700971 / NCTC 13129 / Biotype gravis).